The following is a 359-amino-acid chain: 4-dedimethylamino-4-oxo-anhydrotetracycline transaminase OxyQ (359 aa).

Gly32, Lys92, and Asn155 together coordinate substrate. Residues 91-92 (TK), Asn155, Tyr186, and 216-218 (SLS) each bind pyridoxal 5'-phosphate. Lys219 bears the N6-(pyridoxal phosphate)lysine mark. Arg227 serves as a coordination point for pyridoxal 5'-phosphate. Arg341 contributes to the substrate binding site.

Belongs to the class-I pyridoxal-phosphate-dependent aminotransferase family. Pyridoxal 5'-phosphate serves as cofactor.

It functions in the pathway antibiotic biosynthesis; oxytetracycline biosynthesis. Involved in the biosynthesis of the tetracycline antibiotic, oxytetracycline. Catalyzes the conversion of 4-dedimethylamino-4-oxoanhydrotetracycline to yield 4-amino-4-de(dimethylamino)anhydrotetracycline (4-amino-ATC). This is 4-dedimethylamino-4-oxo-anhydrotetracycline transaminase OxyQ from Streptomyces rimosus.